A 486-amino-acid chain; its full sequence is MAVQPTRIGLAGLAVMGQNLALNIAEKGFPISVYNRTTSKVDETVERAKKEGNLPLYGFHDPESFVKSIQKPRVIIMLVKAGSPVDQTIKTLSAYLEKGDCIVDGGNEWYENTERREKAVAENGFLYLGMGVSGGEEGARNGPSMMPGGSYEAYKNIEDIVLKVAAQVRDSGPCVTYIGKGGSGNFVKMVHNGIEYGDMQLIAEAYDVLKSVGKLSNEELHSVFSDWNKGELESFLVEITADIFGIKDDKGDGHLVDKVLDKTGMKGTGKWTVQQAAELSVPAPTIESSLDARFLSGLKDERVQAAKVFKAGGFGDILTDQKVDKKQLVDDVRKALYASKICSYAQGMNLIRAKSIEKGWGLKLGELARIWKGGCIIRAIFLDRIKQAYDRNAELANLLVDPEFAKEIIERQSAWRRVVCLAINSGISTPGMSASLAYFDSYRRERLPANLVQAQRDYFGAHTYERTDVEGSFHTEWFKIARQSKI.

NADP(+) contacts are provided by residues 12–17 (GLAVMG), 35–37 (NRT), 79–81 (VKA), and Asn107. Residues Asn107 and 133 to 135 (SGG) each bind substrate. Lys188 acts as the Proton acceptor in catalysis. Residue 191-192 (HN) participates in substrate binding. Catalysis depends on Glu195, which acts as the Proton donor. 5 residues coordinate substrate: Tyr196, Lys266, Arg293, Arg456, and His462. Residues 484 to 486 (SKI) carry the Microbody targeting signal motif.

It belongs to the 6-phosphogluconate dehydrogenase family. Forms homodimer. Forms heterodimers with PGD1 or PGD3.

The protein localises to the cytoplasm. The protein resides in the cytosol. It localises to the peroxisome. It carries out the reaction 6-phospho-D-gluconate + NADP(+) = D-ribulose 5-phosphate + CO2 + NADPH. It participates in carbohydrate degradation; pentose phosphate pathway; D-ribulose 5-phosphate from D-glucose 6-phosphate (oxidative stage): step 3/3. Catalyzes the oxidative decarboxylation of 6-phosphogluconate to ribulose 5-phosphate and CO(2), with concomitant reduction of NADP to NADPH. Required for guided growth of the male gametophytes and interaction between the pollen tube and the ovule. The protein is 6-phosphogluconate dehydrogenase, decarboxylating 2 of Arabidopsis thaliana (Mouse-ear cress).